The chain runs to 612 residues: Dihydroxy-acid dehydratase (612 aa).

Residue Asp-81 coordinates Mg(2+). Position 122 (Cys-122) interacts with [2Fe-2S] cluster. Positions 123 and 124 each coordinate Mg(2+). The residue at position 124 (Lys-124) is an N6-carboxylysine. Cys-193 is a binding site for [2Fe-2S] cluster. Glu-489 serves as a coordination point for Mg(2+). Ser-515 (proton acceptor) is an active-site residue.

Belongs to the IlvD/Edd family. In terms of assembly, homodimer. Requires [2Fe-2S] cluster as cofactor. The cofactor is Mg(2+).

The enzyme catalyses (2R)-2,3-dihydroxy-3-methylbutanoate = 3-methyl-2-oxobutanoate + H2O. It catalyses the reaction (2R,3R)-2,3-dihydroxy-3-methylpentanoate = (S)-3-methyl-2-oxopentanoate + H2O. The protein operates within amino-acid biosynthesis; L-isoleucine biosynthesis; L-isoleucine from 2-oxobutanoate: step 3/4. It functions in the pathway amino-acid biosynthesis; L-valine biosynthesis; L-valine from pyruvate: step 3/4. Functions in the biosynthesis of branched-chain amino acids. Catalyzes the dehydration of (2R,3R)-2,3-dihydroxy-3-methylpentanoate (2,3-dihydroxy-3-methylvalerate) into 2-oxo-3-methylpentanoate (2-oxo-3-methylvalerate) and of (2R)-2,3-dihydroxy-3-methylbutanoate (2,3-dihydroxyisovalerate) into 2-oxo-3-methylbutanoate (2-oxoisovalerate), the penultimate precursor to L-isoleucine and L-valine, respectively. This Teredinibacter turnerae (strain ATCC 39867 / T7901) protein is Dihydroxy-acid dehydratase.